A 381-amino-acid chain; its full sequence is DNA replication and repair protein RecF (381 aa).

30–37 (GENAQGKT) is a binding site for ATP.

The protein belongs to the RecF family.

The protein resides in the cytoplasm. Functionally, the RecF protein is involved in DNA metabolism; it is required for DNA replication and normal SOS inducibility. RecF binds preferentially to single-stranded, linear DNA. It also seems to bind ATP. This Lactobacillus delbrueckii subsp. bulgaricus (strain ATCC BAA-365 / Lb-18) protein is DNA replication and repair protein RecF.